Consider the following 726-residue polypeptide: Catalase-peroxidase (726 aa).

The tryptophyl-tyrosyl-methioninium (Trp-Tyr) (with M-239) cross-link spans 90–213 (WHAAGTYRIG…LAAVQMGLIY (124 aa)). Catalysis depends on histidine 91, which acts as the Proton acceptor. The segment at residues 213 to 239 (YVNPEGPNGKPDPAAAARDIRETFARM) is a cross-link (tryptophyl-tyrosyl-methioninium (Tyr-Met) (with W-90)). Histidine 254 contacts heme b. The tract at residues 338–359 (TPKGGAGAGTVPDAHDPSKRHA) is disordered.

This sequence belongs to the peroxidase family. Peroxidase/catalase subfamily. In terms of assembly, homodimer or homotetramer. Heme b serves as cofactor. Formation of the three residue Trp-Tyr-Met cross-link is important for the catalase, but not the peroxidase activity of the enzyme.

It carries out the reaction H2O2 + AH2 = A + 2 H2O. The catalysed reaction is 2 H2O2 = O2 + 2 H2O. Functionally, bifunctional enzyme with both catalase and broad-spectrum peroxidase activity. The protein is Catalase-peroxidase of Bradyrhizobium sp. (strain ORS 278).